The sequence spans 143 residues: Mini-ribonuclease 3 (143 aa).

Aspartate 35 is a catalytic residue.

The protein belongs to the MrnC RNase family. As to quaternary structure, homodimer. It depends on Mg(2+) as a cofactor.

It localises to the cytoplasm. Its function is as follows. Involved in correct processing of both the 5' and 3' ends of 23S rRNA precursor. Processes 30S rRNA precursor transcript even in absence of ribonuclease 3 (Rnc); Rnc processes 30S rRNA into smaller rRNA precursors. The protein is Mini-ribonuclease 3 of Synechocystis sp. (strain ATCC 27184 / PCC 6803 / Kazusa).